We begin with the raw amino-acid sequence, 635 residues long: Threonine--tRNA ligase (635 aa).

The TGS domain maps to 1-61 (MINISFPDGS…DNDCKLRILT (61 aa)). The tract at residues 242–533 (DHRKLGRELD…LIEEYAGRFP (292 aa)) is catalytic. The Zn(2+) site is built by cysteine 333, histidine 384, and histidine 510.

Belongs to the class-II aminoacyl-tRNA synthetase family. Homodimer. Zn(2+) is required as a cofactor.

The protein resides in the cytoplasm. The catalysed reaction is tRNA(Thr) + L-threonine + ATP = L-threonyl-tRNA(Thr) + AMP + diphosphate + H(+). Catalyzes the attachment of threonine to tRNA(Thr) in a two-step reaction: L-threonine is first activated by ATP to form Thr-AMP and then transferred to the acceptor end of tRNA(Thr). Also edits incorrectly charged L-seryl-tRNA(Thr). The sequence is that of Threonine--tRNA ligase from Rickettsia africae (strain ESF-5).